Here is a 363-residue protein sequence, read N- to C-terminus: Lipase (363 aa).

The N-terminal stretch at 1–24 (MVLKQRANYLGFLIVFFTAFLVEA) is a signal peptide. The propeptide occupies 25–94 (VPIKRQSNST…SYPDSVVQAM (70 aa)). Residues 33–69 (STVDSLPPLIPSRTSAPSSSPSTTDPEAPAMSRNGPL) form a disordered region. Residues 43 to 62 (PSRTSAPSSSPSTTDPEAPA) show a composition bias toward low complexity. Cystine bridges form between Cys-123–Cys-362, Cys-134–Cys-137, and Cys-329–Cys-338. Ser-238 functions as the Nucleophile in the catalytic mechanism. The active-site Charge relay system is the Asp-297. Asp-350 contributes to the Ca(2+) binding site. The Charge relay system role is filled by His-351.

The protein belongs to the AB hydrolase superfamily. Lipase family.

It catalyses the reaction a triacylglycerol + H2O = a diacylglycerol + a fatty acid + H(+). The polypeptide is Lipase (Rhizomucor miehei).